The following is a 309-amino-acid chain: Thiamine-monophosphate kinase (309 aa).

Mg(2+) contacts are provided by Asp25, Thr39, Ser40, and Asp41. Position 48 (Asp48) interacts with substrate. Residues Asp69 and Asp117 each contribute to the Mg(2+) site. ATP is bound by residues 116–117 and Arg140; that span reads GD. Asp201 is a binding site for Mg(2+). ATP is bound at residue Ser203. Asp204 lines the Mg(2+) pocket. Residues Glu250 and Trp298 each coordinate substrate.

The protein belongs to the thiamine-monophosphate kinase family.

The enzyme catalyses thiamine phosphate + ATP = thiamine diphosphate + ADP. Its pathway is cofactor biosynthesis; thiamine diphosphate biosynthesis; thiamine diphosphate from thiamine phosphate: step 1/1. Catalyzes the ATP-dependent phosphorylation of thiamine-monophosphate (TMP) to form thiamine-pyrophosphate (TPP), the active form of vitamin B1. The protein is Thiamine-monophosphate kinase of Pyrococcus horikoshii (strain ATCC 700860 / DSM 12428 / JCM 9974 / NBRC 100139 / OT-3).